The primary structure comprises 146 residues: UPF0178 protein OB0454 (146 aa).

Belongs to the UPF0178 family.

The sequence is that of UPF0178 protein OB0454 from Oceanobacillus iheyensis (strain DSM 14371 / CIP 107618 / JCM 11309 / KCTC 3954 / HTE831).